The chain runs to 302 residues: Aquaporin NIP3-1 (302 aa).

Residues 1–31 form a disordered region; sequence MEPGSTPPNGSAPATPGTPAPLFSSGGPRVD. The span at 7 to 21 shows a compositional bias: low complexity; sequence PPNGSAPATPGTPAP. Helical transmembrane passes span 76 to 96 and 102 to 122; these read LGAE…APIV and GAIS…TVIL. The NPA 1 signature appears at 133–135; sequence NPS. A run of 3 helical transmembrane segments spans residues 149 to 169, 193 to 213, and 217 to 237; these read LQVP…AFAL, AFFT…AVAT, and AVGE…ILVA. Residues 246-248 carry the NPA 2 motif; it reads NPV. A helical transmembrane segment spans residues 264–284; the sequence is WIYLLAPTLGALAGASVYKAV.

Belongs to the MIP/aquaporin (TC 1.A.8) family. NIP (TC 1.A.8.12) subfamily.

Its subcellular location is the membrane. Aquaporins facilitate the transport of water and small neutral solutes across cell membranes. This is Aquaporin NIP3-1 (NIP3-1) from Zea mays (Maize).